The chain runs to 298 residues: Mimecan (298 aa).

A signal peptide spans 1–19 (METVHSTFLLLLFVPLTQQ). N-linked (GlcNAc...) (keratan sulfate) asparagine glycosylation occurs at Asn-88. 7 LRR repeats span residues 112–131 (DAVP…FNKI), 132–155 (KKLT…GNLI), 156–179 (EDIE…ENQL), 180–199 (LRLP…HNKI), 200–225 (KSKG…HNDL), 226–246 (ESVP…FNSI), and 247–277 (SSLT…GNPI). Residues Cys-255 and Cys-288 are joined by a disulfide bond. An N-linked (GlcNAc...) (keratan sulfate) asparagine glycan is attached at Asn-258.

It belongs to the small leucine-rich proteoglycan (SLRP) family. SLRP class III subfamily. Post-translationally, contains keratan sulfate.

Its subcellular location is the secreted. The protein resides in the extracellular space. The protein localises to the extracellular matrix. Functionally, induces bone formation in conjunction with TGF-beta-1 or TGF-beta-2. This is Mimecan (Ogn) from Mus musculus (Mouse).